Here is a 405-residue protein sequence, read N- to C-terminus: Subtilisin-like protease 6 (405 aa).

An N-terminal signal peptide occupies residues phenylalanine 1 to glycine 18. Positions alanine 19–leucine 125 are excised as a propeptide. Positions lysine 34–threonine 118 constitute an Inhibitor I9 domain. 2 N-linked (GlcNAc...) asparagine glycosylation sites follow: asparagine 121 and asparagine 124. In terms of domain architecture, Peptidase S8 spans serine 133–tyrosine 405. Residues aspartate 165 and histidine 196 each act as charge relay system in the active site. 2 N-linked (GlcNAc...) asparagine glycosylation sites follow: asparagine 250 and asparagine 262. Residue serine 356 is the Charge relay system of the active site.

It belongs to the peptidase S8 family.

It localises to the secreted. In terms of biological role, secreted subtilisin-like serine protease with keratinolytic activity that contributes to pathogenicity. This chain is Subtilisin-like protease 6 (SUB6), found in Trichophyton schoenleinii.